Here is a 210-residue protein sequence, read N- to C-terminus: Cytidylate kinase (210 aa).

7–15 is a binding site for ATP; that stretch reads GPAASGKGT.

This sequence belongs to the cytidylate kinase family. Type 1 subfamily.

The protein resides in the cytoplasm. The enzyme catalyses CMP + ATP = CDP + ADP. It carries out the reaction dCMP + ATP = dCDP + ADP. The polypeptide is Cytidylate kinase (Methylobacterium sp. (strain 4-46)).